The chain runs to 215 residues: Large ribosomal subunit protein uL4 (215 aa).

The disordered stretch occupies residues 51–88 (KGMGEVSGTTKKPYRQKGTGNARQGSLRAPQFRTGGAV).

This sequence belongs to the universal ribosomal protein uL4 family. As to quaternary structure, part of the 50S ribosomal subunit.

In terms of biological role, one of the primary rRNA binding proteins, this protein initially binds near the 5'-end of the 23S rRNA. It is important during the early stages of 50S assembly. It makes multiple contacts with different domains of the 23S rRNA in the assembled 50S subunit and ribosome. Forms part of the polypeptide exit tunnel. This is Large ribosomal subunit protein uL4 from Granulibacter bethesdensis (strain ATCC BAA-1260 / CGDNIH1).